Consider the following 161-residue polypeptide: 6,7-dimethyl-8-ribityllumazine synthase (161 aa).

Residues Trp31, 63 to 65 (SFE), and 85 to 87 (VVI) contribute to the 5-amino-6-(D-ribitylamino)uracil site. 90 to 91 (GT) is a (2S)-2-hydroxy-3-oxobutyl phosphate binding site. Residue His93 is the Proton donor of the active site. Phe118 is a binding site for 5-amino-6-(D-ribitylamino)uracil. Arg132 serves as a coordination point for (2S)-2-hydroxy-3-oxobutyl phosphate.

This sequence belongs to the DMRL synthase family.

The catalysed reaction is (2S)-2-hydroxy-3-oxobutyl phosphate + 5-amino-6-(D-ribitylamino)uracil = 6,7-dimethyl-8-(1-D-ribityl)lumazine + phosphate + 2 H2O + H(+). Its pathway is cofactor biosynthesis; riboflavin biosynthesis; riboflavin from 2-hydroxy-3-oxobutyl phosphate and 5-amino-6-(D-ribitylamino)uracil: step 1/2. Catalyzes the formation of 6,7-dimethyl-8-ribityllumazine by condensation of 5-amino-6-(D-ribitylamino)uracil with 3,4-dihydroxy-2-butanone 4-phosphate. This is the penultimate step in the biosynthesis of riboflavin. The protein is 6,7-dimethyl-8-ribityllumazine synthase of Arthrobacter sp. (strain FB24).